Reading from the N-terminus, the 431-residue chain is Adenylosuccinate synthetase (431 aa).

GTP contacts are provided by residues Gly-12–Lys-18 and Gly-40–Thr-42. The active-site Proton acceptor is Asp-13. The Mg(2+) site is built by Asp-13 and Gly-40. IMP-binding positions include Asp-13–Lys-16, Asn-38–His-41, Thr-128, Arg-142, Gln-223, Thr-238, and Arg-301. His-41 serves as the catalytic Proton donor. Thr-297–Arg-303 provides a ligand contact to substrate. Residues Arg-303, Ser-329 to Asp-331, and Ser-411 to Gly-413 each bind GTP.

Belongs to the adenylosuccinate synthetase family. As to quaternary structure, homodimer. It depends on Mg(2+) as a cofactor.

The protein resides in the cytoplasm. It catalyses the reaction IMP + L-aspartate + GTP = N(6)-(1,2-dicarboxyethyl)-AMP + GDP + phosphate + 2 H(+). Its pathway is purine metabolism; AMP biosynthesis via de novo pathway; AMP from IMP: step 1/2. In terms of biological role, plays an important role in the de novo pathway of purine nucleotide biosynthesis. Catalyzes the first committed step in the biosynthesis of AMP from IMP. In Lacticaseibacillus paracasei (strain ATCC 334 / BCRC 17002 / CCUG 31169 / CIP 107868 / KCTC 3260 / NRRL B-441) (Lactobacillus paracasei), this protein is Adenylosuccinate synthetase.